Here is a 364-residue protein sequence, read N- to C-terminus: GMP reductase (364 aa).

Residues 26-27 (SR), lysine 78, 132-134 (DVA), and 183-184 (IG) contribute to the NADP(+) site. The K(+) site is built by glycine 184, glycine 186, and cysteine 189. The Thioimidate intermediate role is filled by cysteine 189. The Proton donor/acceptor role is filled by threonine 191. Arginine 192 contributes to the K(+) binding site. GMP is bound by residues 222-224 (DGG), 245-246 (GG), 271-273 (GMS), and 289-293 (RASEG). Residues methionine 272, 288–289 (YR), and 317–320 (SACT) contribute to the NADP(+) site.

This sequence belongs to the IMPDH/GMPR family. GuaC type 1 subfamily. As to quaternary structure, homotetramer.

It carries out the reaction IMP + NH4(+) + NADP(+) = GMP + NADPH + 2 H(+). Functionally, catalyzes the irreversible NADPH-dependent deamination of GMP to IMP. It functions in the conversion of nucleobase, nucleoside and nucleotide derivatives of G to A nucleotides, and in maintaining the intracellular balance of A and G nucleotides. The protein is GMP reductase (gmr-1) of Onchocerca volvulus.